A 506-amino-acid polypeptide reads, in one-letter code: Exopolysaccharide phosphotransferase NFA_48680 (506 aa).

Residues Pro-484–Ala-506 form a disordered region.

The protein belongs to the stealth family.

In Nocardia farcinica (strain IFM 10152), this protein is Exopolysaccharide phosphotransferase NFA_48680.